A 335-amino-acid chain; its full sequence is Fructose-1,6-bisphosphatase class 1 (335 aa).

Mg(2+) is bound by residues E92, D115, L117, and D118. Substrate contacts are provided by residues 118-121 (DGSS), N211, Y244, 262-264 (YLY), and K274. Residue E280 coordinates Mg(2+).

This sequence belongs to the FBPase class 1 family. As to quaternary structure, homotetramer. The cofactor is Mg(2+).

It localises to the cytoplasm. It carries out the reaction beta-D-fructose 1,6-bisphosphate + H2O = beta-D-fructose 6-phosphate + phosphate. It functions in the pathway carbohydrate biosynthesis; gluconeogenesis. This is Fructose-1,6-bisphosphatase class 1 from Teredinibacter turnerae (strain ATCC 39867 / T7901).